Here is a 595-residue protein sequence, read N- to C-terminus: Elongation factor 4 (595 aa).

The tr-type G domain maps to 2 to 184 (ETIRNFSIIA…TITHNIPYPK (183 aa)). GTP-binding positions include 14 to 19 (DHGKST) and 131 to 134 (NKID).

The protein belongs to the TRAFAC class translation factor GTPase superfamily. Classic translation factor GTPase family. LepA subfamily.

It localises to the cell membrane. The catalysed reaction is GTP + H2O = GDP + phosphate + H(+). In terms of biological role, required for accurate and efficient protein synthesis under certain stress conditions. May act as a fidelity factor of the translation reaction, by catalyzing a one-codon backward translocation of tRNAs on improperly translocated ribosomes. Back-translocation proceeds from a post-translocation (POST) complex to a pre-translocation (PRE) complex, thus giving elongation factor G a second chance to translocate the tRNAs correctly. Binds to ribosomes in a GTP-dependent manner. The polypeptide is Elongation factor 4 (Buchnera aphidicola subsp. Baizongia pistaciae (strain Bp)).